The following is a 451-amino-acid chain: Zinc metalloproteinase nas-16 (451 aa).

Residues 70-273 (QVVTKLFSPQ…LTINTAYNCK (204 aa)) enclose the Peptidase M12A domain. Disulfide bonds link cysteine 127-cysteine 272, cysteine 148-cysteine 167, cysteine 274-cysteine 291, and cysteine 296-cysteine 305. A glycan (N-linked (GlcNAc...) asparagine) is linked at asparagine 133. Residue histidine 175 participates in Zn(2+) binding. Glutamate 176 is a catalytic residue. Residues histidine 179 and histidine 185 each coordinate Zn(2+). Residues 267 to 306 (NTAYNCKCPSELLCANGGYTNPSNCLECICPLGYGGVLCD) enclose the EGF-like domain. Asparagine 363 and asparagine 438 each carry an N-linked (GlcNAc...) asparagine glycan.

It depends on Zn(2+) as a cofactor.

Its subcellular location is the secreted. Metalloprotease. The chain is Zinc metalloproteinase nas-16 (nas-16) from Caenorhabditis elegans.